Here is a 599-residue protein sequence, read N- to C-terminus: Exocyst complex component EXO70B2 (599 aa).

The segment at 38 to 58 (GASGNRGGDPRPTPSRGGSNV) is disordered.

It belongs to the EXO70 family. As to quaternary structure, self interacts. Interacts with EXO70B1. Interacts with the exocyst subunits EXO70H1, SEC5A and SEC15B. Binds to SNAP33. Subunit of the exocyst complex that mediates vesicle tethering during exocytosis. Binds to PUB22. Post-translationally, target of the E3 ubiquitin-protein ligase PUB22 that mediates its ubiquitination and degradation via the 26S proteasome to attenuate pathogen-associated molecular patterns (PAMP)-induced signaling, especially is response to the bacterial elicitor flg22. Mostly expressed in leaves and, to a lower extent, in roots, cotyledons, internodes, flower buds, siliques and anthers.

It is found in the cytoplasmic vesicle. Its subcellular location is the phagosome. It localises to the cytoplasm. The protein localises to the nucleus. In terms of biological role, component of an exocyst subcomplex specifically involved in autophagy-related, Golgi-independent membrane traffic to the vacuole. Regulates autophagosome formation and autophagy-related Golgi-independent import into the vacuole. Positive regulator of defense responses to pathogenic bacteria (e.g. P.syringae pv. maculicola), to the biotrophic oomycete H.arabidopsidis and to fungi (e.g. B.graminis hordei), especially in cell wall apposition formation related to plant defense. Required for both immediate and later responses triggered by pathogen-associated molecular patterns (PAMPs). Positive regulator of abscisic acid (ABA)-independent mannitol (drought)-promoted stomatal closure. In Arabidopsis thaliana (Mouse-ear cress), this protein is Exocyst complex component EXO70B2.